A 488-amino-acid chain; its full sequence is MTTQSSSSSSSLPSSLSSTPPLLASNARCKVLRTGASSKGKGKGIKYPVDRISMLPDEMLQKILSTLSTKDAVITSTLSKRWVDQWKRIPHLCVDMRNIMRTNPTSYVHELSFRFAESMTKTLNNHRGHLESCTISHIQFIFLFIDRWIQTVTREKQTKEITLVNNIGCMTPFVRYNSLHLSPSAFCHPSLTSLSLTRYKLLEKAFKNCCNLKILKLYDIMSDVSVLSNVIKACSSLEVLVLQITFLNQASALKIENKKLEFLQVTWPCLMNRMEVNTPRLVIFDIKSIYCFGYSVEAPKLSMFKRDYWVGGMSYPHLSYHISSLAQEKIRIWLELMVSQIYHMKRTGSLSVSVDVRNPNEVEILKEVLLLWDGEMMDLEILFKNNNAPIEEGESFITGGARNKWWDGEKPFPDDFFRVCTVWMYNFDGSNEEEFALASRFVTQGTVTEKLMIKTSTYPPVKQLMTEAKVAKLMELPKGYEYLDIECF.

A disordered region spans residues 1-21 (MTTQSSSSSSSLPSSLSSTPP). Residues 49–95 (VDRISMLPDEMLQKILSTLSTKDAVITSTLSKRWVDQWKRIPHLCVD) form the F-box domain.

The protein is F-box protein At3g60790 of Arabidopsis thaliana (Mouse-ear cress).